A 443-amino-acid chain; its full sequence is Phosphoglucosamine mutase (443 aa).

The active-site Phosphoserine intermediate is the Ser-101. Mg(2+) contacts are provided by Ser-101, Asp-239, Asp-241, and Asp-243. Ser-101 bears the Phosphoserine mark.

It belongs to the phosphohexose mutase family. Mg(2+) serves as cofactor. In terms of processing, activated by phosphorylation.

It carries out the reaction alpha-D-glucosamine 1-phosphate = D-glucosamine 6-phosphate. Its function is as follows. Catalyzes the conversion of glucosamine-6-phosphate to glucosamine-1-phosphate. This is Phosphoglucosamine mutase from Francisella tularensis subsp. holarctica (strain FTNF002-00 / FTA).